The sequence spans 547 residues: Dihydroxy-acid dehydratase (547 aa).

Residue aspartate 78 participates in Mg(2+) binding. A [2Fe-2S] cluster-binding site is contributed by cysteine 119. The Mg(2+) site is built by aspartate 120 and lysine 121. Lysine 121 bears the N6-carboxylysine mark. Position 191 (cysteine 191) interacts with [2Fe-2S] cluster. A Mg(2+)-binding site is contributed by glutamate 439. Serine 464 serves as the catalytic Proton acceptor.

It belongs to the IlvD/Edd family. In terms of assembly, homodimer. Requires [2Fe-2S] cluster as cofactor. Mg(2+) is required as a cofactor.

The enzyme catalyses (2R)-2,3-dihydroxy-3-methylbutanoate = 3-methyl-2-oxobutanoate + H2O. The catalysed reaction is (2R,3R)-2,3-dihydroxy-3-methylpentanoate = (S)-3-methyl-2-oxopentanoate + H2O. Its pathway is amino-acid biosynthesis; L-isoleucine biosynthesis; L-isoleucine from 2-oxobutanoate: step 3/4. The protein operates within amino-acid biosynthesis; L-valine biosynthesis; L-valine from pyruvate: step 3/4. Functionally, functions in the biosynthesis of branched-chain amino acids. Catalyzes the dehydration of (2R,3R)-2,3-dihydroxy-3-methylpentanoate (2,3-dihydroxy-3-methylvalerate) into 2-oxo-3-methylpentanoate (2-oxo-3-methylvalerate) and of (2R)-2,3-dihydroxy-3-methylbutanoate (2,3-dihydroxyisovalerate) into 2-oxo-3-methylbutanoate (2-oxoisovalerate), the penultimate precursor to L-isoleucine and L-valine, respectively. This is Dihydroxy-acid dehydratase from Methanospirillum hungatei JF-1 (strain ATCC 27890 / DSM 864 / NBRC 100397 / JF-1).